We begin with the raw amino-acid sequence, 294 residues long: UPF0718 protein YcgR (294 aa).

8 consecutive transmembrane segments (helical) span residues 15 to 35, 54 to 74, 92 to 112, 117 to 137, 174 to 194, 215 to 235, 247 to 267, and 273 to 293; these read ISIL…SGII, LAVL…CGII, AFML…YIAF, SVVF…GVIL, IDEF…AAAM, LVMM…AFIA, LIAF…MMLA, and FVFL…LLVK.

This sequence belongs to the UPF0718 family.

The protein localises to the cell membrane. This Bacillus subtilis (strain 168) protein is UPF0718 protein YcgR (ycgR).